Reading from the N-terminus, the 1015-residue chain is PHD finger protein 20-like protein 1 (1015 aa).

Residues 11 to 71 enclose the Tudor 1 domain; that stretch reads ITFEIGARLE…SNRLRPLERP (61 aa). Residues K75 and K79 each participate in a glycyl lysine isopeptide (Lys-Gly) (interchain with G-Cter in SUMO2) cross-link. One can recognise a Tudor 2 domain in the interval 85 to 141; that stretch reads FDFKAGEEVLARWTDCRYYPAKIEAINKEGTFTVQFYDGVIRCLKRMHIKAMPEDAK. Disordered regions lie at residues 183-206 and 309-367; these read AKNKTGSKPRTSANSNKEKERDGG and EQAI…KAPK. Polar residues-rich tracts occupy residues 186–197 and 315–346; these read KTGSKPRTSANS and KPQSQKKNEAVISSSANTQKPALLSSTLSSGK. S368 carries the phosphoserine modification. 2 disordered regions span residues 389 to 455 and 478 to 513; these read VINK…SSVP and CGSEVTGSQAPDSSYPGGECPREEKEETPLFANPTS. Residues 404-415 show a composition bias toward basic residues; the sequence is PCKHSERRRRSQ. S432 is modified (phosphoserine). Composition is skewed to polar residues over residues 443-453 and 480-489; these read SISSQNQQESS and SEVTGSQAPD. K530 participates in a covalent cross-link: Glycyl lysine isopeptide (Lys-Gly) (interchain with G-Cter in SUMO2). Residues 539 to 565 show a composition bias toward basic and acidic residues; the sequence is EKTSTAFGKRKEKDKERKEKRDKDHYK. The interval 539 to 585 is disordered; sequence EKTSTAFGKRKEKDKERKEKRDKDHYKPKQKKKKKKKKKSKQHDYSD. The span at 566–579 shows a compositional bias: basic residues; sequence PKQKKKKKKKKKSK. The PHD-type zinc-finger motif lies at 681–729; that stretch reads IVRCICELDEENGFMIQCEECLCWQHSVCMGLLEDSIPEQYICYICRDP. K849 is covalently cross-linked (Glycyl lysine isopeptide (Lys-Gly) (interchain with G-Cter in SUMO2)). Positions 859–878 are enriched in polar residues; sequence HSYQKPQSFSQDCHSLTDPG. A disordered region spans residues 859-889; sequence HSYQKPQSFSQDCHSLTDPGSSDDDDVSSFE. Acidic residues predominate over residues 879-889; it reads SSDDDDVSSFE. At K907 the chain carries N6-acetyllysine.

Interacts with methylated DNMT1 (DNMT1K142me1). Interacts with SOX2.

It localises to the nucleus. Is a negative regulator of proteasomal degradation of a set of methylated proteins, including DNMT1 and SOX2. Involved in the maintainance of embryonic stem cells pluripotency, through the regulation of SOX2 levels. The chain is PHD finger protein 20-like protein 1 (Phf20l1) from Rattus norvegicus (Rat).